The sequence spans 347 residues: Methylthioribose-1-phosphate isomerase (347 aa).

Residues 47–49 (RGA), Arg90, and Gln199 each bind substrate. The active-site Proton donor is Asp240. Residue 250–251 (NK) coordinates substrate.

This sequence belongs to the eIF-2B alpha/beta/delta subunits family. MtnA subfamily.

It carries out the reaction 5-(methylsulfanyl)-alpha-D-ribose 1-phosphate = 5-(methylsulfanyl)-D-ribulose 1-phosphate. Its pathway is amino-acid biosynthesis; L-methionine biosynthesis via salvage pathway; L-methionine from S-methyl-5-thio-alpha-D-ribose 1-phosphate: step 1/6. Catalyzes the interconversion of methylthioribose-1-phosphate (MTR-1-P) into methylthioribulose-1-phosphate (MTRu-1-P). The protein is Methylthioribose-1-phosphate isomerase of Natranaerobius thermophilus (strain ATCC BAA-1301 / DSM 18059 / JW/NM-WN-LF).